Reading from the N-terminus, the 126-residue chain is UPF0332 protein glr0978 (126 aa).

It belongs to the UPF0332 family.

The polypeptide is UPF0332 protein glr0978 (Gloeobacter violaceus (strain ATCC 29082 / PCC 7421)).